The sequence spans 106 residues: L-rhamnose mutarotase (106 aa).

Position 20 (Y20) interacts with substrate. H24 serves as the catalytic Proton donor. Substrate is bound by residues Y43 and 78-79; that span reads WW.

It belongs to the rhamnose mutarotase family. In terms of assembly, homodimer.

The protein resides in the cytoplasm. It carries out the reaction alpha-L-rhamnose = beta-L-rhamnose. It functions in the pathway carbohydrate metabolism; L-rhamnose metabolism. Its function is as follows. Involved in the anomeric conversion of L-rhamnose. The protein is L-rhamnose mutarotase of Verminephrobacter eiseniae (strain EF01-2).